The primary structure comprises 369 residues: uncharacterized protein (369 aa).

A signal peptide spans 1 to 19; the sequence is MKKLIAVAVLSACGSLAHA.

This is an uncharacterized protein from Haemophilus influenzae (strain ATCC 51907 / DSM 11121 / KW20 / Rd).